Reading from the N-terminus, the 691-residue chain is Choline transporter-like 1 (691 aa).

The segment covering 1–10 (MGCAESKDGE) has biased composition (basic and acidic residues). A disordered region spans residues 1–20 (MGCAESKDGEGEAQNNRPKY). The next 3 membrane-spanning stretches (helical) occupy residues 28 to 48 (WLAI…FSFV), 205 to 225 (WHII…LVTM), and 232 to 252 (IVSW…TVAL). N-linked (GlcNAc...) asparagine glycosylation occurs at asparagine 261. A run of 2 helical transmembrane segments spans residues 282 to 302 (VLTL…VIYF) and 332 to 352 (LLAF…IICL). A glycan (N-linked (GlcNAc...) asparagine) is linked at asparagine 385. 4 helical membrane-spanning segments follow: residues 408–428 (SMFW…FACQ), 527–547 (VVAI…NAMA), 562–582 (FILF…GIVL), and 591–611 (FYMA…HIIL).

This sequence belongs to the CTL (choline transporter-like) family.

It localises to the membrane. The protein is Choline transporter-like 1 of Drosophila melanogaster (Fruit fly).